The primary structure comprises 630 residues: tRNA uridine 5-carboxymethylaminomethyl modification enzyme MnmG (630 aa).

13–18 lines the FAD pocket; it reads GGGHAG. 273-287 lines the NAD(+) pocket; the sequence is GPRYCPSIEDKVMRF.

The protein belongs to the MnmG family. In terms of assembly, homodimer. Heterotetramer of two MnmE and two MnmG subunits. The cofactor is FAD.

It localises to the cytoplasm. Functionally, NAD-binding protein involved in the addition of a carboxymethylaminomethyl (cmnm) group at the wobble position (U34) of certain tRNAs, forming tRNA-cmnm(5)s(2)U34. The sequence is that of tRNA uridine 5-carboxymethylaminomethyl modification enzyme MnmG from Actinobacillus pleuropneumoniae serotype 5b (strain L20).